Here is a 109-residue protein sequence, read N- to C-terminus: Juvenile hormone esterase, isoform A (109 aa).

The protein belongs to the type-B carboxylesterase/lipase family. In terms of tissue distribution, fat body, the site of their biosynthesis, and the hemolymph where it is secreted.

The catalysed reaction is juvenile hormone I + H2O = juvenile hormone I carboxylate + methanol + H(+). It carries out the reaction juvenile hormone III + H2O = juvenile hormone III carboxylate + methanol + H(+). In terms of biological role, JH esterase plays a crucial role in the decrease of JH activity in lepidopteran insects, by hydrolyzing the methyl ester of JH. It is also involved in the transport of JH. This chain is Juvenile hormone esterase, isoform A, found in Trichoplusia ni (Cabbage looper).